The following is a 345-amino-acid chain: Transcription initiation factor IIB (345 aa).

The TFIIB-type zinc finger occupies 8-40; that stretch reads VGRNCPHCSAVDSLQTDDVMGEVACTACALVVA. Zn(2+) contacts are provided by Cys-12, Cys-15, Cys-32, and Cys-35. Disordered stretches follow at residues 59–89 and 318–345; these read DVDHHRERNANPTAATSAAGSLSAADPHMSS and PTAGKRKVDKNSEPEASGGTKRVKREET. Low complexity predominate over residues 71 to 83; the sequence is TAATSAAGSLSAA.

The protein belongs to the TFIIB family. Monomer. Interacts with RNA polymerase II subunits RPB1 and RPB2. Interacts with TBP; the interaction is direct.

The protein resides in the nucleus. In terms of biological role, specifically binds to the promoter of the spliced leader (SL) RNA gene and thus is essential for SLRNA transcription. The chain is Transcription initiation factor IIB from Trypanosoma brucei brucei.